The primary structure comprises 457 residues: Multidrug resistance protein MdtK (457 aa).

A run of 12 helical transmembrane segments spans residues 11 to 31 (LLALAIPVILAQIAQTAMGFV), 53 to 73 (IWLPAILFGHGLLLALTPVIA), 93 to 113 (WLAGFVSVLIMLVLWNAGYII), 127 to 147 (AVGYLRALLWGAPGYLFFQVA), 160 to 180 (GMVMGFIGLLVNIPVNYIFIY), 189 to 209 (GGVGCGVATAAVYWVMFLAMV), 243 to 263 (LPIALALFFEVTLFAVVALLV), 276 to 296 (IALNFSSLMFVLPMSLAAAVT), 314 to 334 (AARTGLMVGVCMATLTAIFTV), 350 to 370 (VVTLAAHLMLLAAVYQISDSI), 387 to 407 (IFYITFTAYWVLGLPSGYILA), and 418 to 438 (PAGFWIGFIIGLTSAAIMMML).

The protein belongs to the multi antimicrobial extrusion (MATE) (TC 2.A.66.1) family. MdtK subfamily.

Its subcellular location is the cell inner membrane. In terms of biological role, multidrug efflux pump that functions probably as a Na(+)/drug antiporter. The polypeptide is Multidrug resistance protein MdtK (Escherichia coli O17:K52:H18 (strain UMN026 / ExPEC)).